Consider the following 94-residue polypeptide: METKNAKAIARKVSIAPRKARLVVDLIRGKNIAQAQAILTFTPKVAAPVILKLLNSAVSNAVNNLKLNREQLYVKEVFVNEGFRLKRMFPRAKG.

Belongs to the universal ribosomal protein uL22 family. In terms of assembly, part of the 50S ribosomal subunit.

Its function is as follows. This protein binds specifically to 23S rRNA; its binding is stimulated by other ribosomal proteins, e.g. L4, L17, and L20. It is important during the early stages of 50S assembly. It makes multiple contacts with different domains of the 23S rRNA in the assembled 50S subunit and ribosome. In terms of biological role, the globular domain of the protein is located near the polypeptide exit tunnel on the outside of the subunit, while an extended beta-hairpin is found that lines the wall of the exit tunnel in the center of the 70S ribosome. This Tomato big bud phytoplasma protein is Large ribosomal subunit protein uL22 (rplV).